Here is a 353-residue protein sequence, read N- to C-terminus: Guanine nucleotide-binding protein subunit alpha (353 aa).

Positions 1–26 are disordered; the sequence is MGCGMSVEEKEGKARNEEIENQLKRD. A lipid anchor (N-myristoyl glycine) is attached at Gly-2. Cys-3 carries the S-palmitoyl cysteine lipid modification. Residues 7 to 26 are compositionally biased toward basic and acidic residues; it reads VEEKEGKARNEEIENQLKRD. The region spanning 32–353 is the G-alpha domain; it reads NEIKMLLLGA…QENLRLCGLI (322 aa). The interval 35-48 is G1 motif; it reads KMLLLGAGESGKST. Residues Glu-43, Ser-44, Gly-45, Lys-46, Ser-47, Thr-48, Asp-150, Leu-175, Thr-181, Gly-203, Asn-269, Lys-270, Asp-272, and Ala-325 each coordinate GTP. Mg(2+) is bound at residue Ser-47. A G2 motif region spans residues 173–181; that stretch reads DVLRSRVKT. Thr-181 contacts Mg(2+). The tract at residues 196 to 205 is G3 motif; it reads YRMFDVGGQR. Residues 265–272 are G4 motif; that stretch reads ILFLNKID. The tract at residues 323–328 is G5 motif; it reads TCATDT.

The protein belongs to the G-alpha family. G(q) subfamily. G proteins are composed of 3 units; alpha, beta and gamma. The alpha chain contains the guanine nucleotide binding site. It depends on Mg(2+) as a cofactor.

Guanine nucleotide-binding proteins (G proteins) are involved as modulators or transducers in various transmembrane signaling systems. This chain is Guanine nucleotide-binding protein subunit alpha (SSG-1), found in Sporothrix schenckii (strain ATCC 58251 / de Perez 2211183) (Rose-picker's disease fungus).